Consider the following 782-residue polypeptide: General transcription and DNA repair factor IIH helicase/translocase subunit XPB (782 aa).

The span at 1–11 (MGKRDRVDRDK) shows a compositional bias: basic and acidic residues. Residues 1 to 52 (MGKRDRVDRDKKKSKKRQYEEEEEDEDDAPGNESQEAVPSAAGKQVDESSTK) form a disordered region. The Nuclear localization signal signature appears at 6-18 (RVDRDKKKSKKRQ). A compositionally biased stretch (acidic residues) spans 20-30 (EEEEEDEDDAP). S34 carries the post-translational modification Phosphoserine. The Helicase ATP-binding domain occupies 328 to 489 (FGNGRARSGV…LNFLIGPKLY (162 aa)). 341 to 348 (PCGAGKSL) contributes to the ATP binding site. The DEVH box signature appears at 442-445 (EVHT). In terms of domain architecture, Helicase C-terminal spans 543–703 (ACQFLIKFHE…AGMEEEELAF (161 aa)). S686 is subject to Phosphoserine. A Phosphoserine; by CK2 modification is found at S751.

This sequence belongs to the helicase family. RAD25/XPB subfamily. As to quaternary structure, component of the 7-subunit TFIIH core complex composed of XPB/ERCC3, XPD/ERCC2, GTF2H1, GTF2H2, GTF2H3, GTF2H4 and GTF2H5, which is active in NER. The core complex associates with the 3-subunit CDK-activating kinase (CAK) module composed of CCNH/cyclin H, CDK7 and MNAT1 to form the 10-subunit holoenzyme (holo-TFIIH) active in transcription. Interacts with PUF60. Interacts with ATF7IP. Interacts with KAT2A; leading to KAT2A recruitment to promoters and acetylation of histones. Part of TBP-based Pol II pre-initiation complex (PIC), in which Pol II core assembles with general transcription factors and other specific initiation factors including GTF2E1, GTF2E2, GTF2F1, GTF2F2, TCEA1, ERCC2, ERCC3, GTF2H2, GTF2H3, GTF2H4, GTF2H5, GTF2A1, GTF2A2, GTF2B and TBP; this large multi-subunit PIC complex mediates DNA unwinding and targets Pol II core to the transcription start site where the first phosphodiester bond forms. Phosphorylation on Ser-751 by CK2 controls the 5'-excision activity of ERCC1-XPF endonuclease; phosphorylated protein inhibits the excision activity and thus NER. Dephosphorylation reactivates the 5'-excision step. Phosphorylation has no effect on transcription or the 3'-5' helicase activity.

The protein localises to the nucleus. The enzyme catalyses Couples ATP hydrolysis with the unwinding of duplex DNA by translocating in the 3'-5' direction.. It catalyses the reaction ATP + H2O = ADP + phosphate + H(+). Its activity is regulated as follows. Phosphorylation on Ser-751 by CK2 controls the 5'-excision activity of ERCC1-XPF endonuclease; phosphorylated protein inhibits the excision activity and thus NER. ATPase activity is stimulated by TFIIH subunit p52 (GTF2H4). DNA translocase activity by this subunit in TFIIH is stimulated by XPA, ERCC5/XPG and XFP plus ERCC1. Functionally, ATP-dependent 3'-5' DNA helicase/translocase; binds dsDNA rather than ssDNA, unzipping it in a translocase rather than classical helicase activity. Component of the general transcription and DNA repair factor IIH (TFIIH) core complex. When complexed to CDK-activating kinase (CAK), involved in RNA transcription by RNA polymerase II. The ATPase activity of XPB/ERCC3, but not its helicase activity, is required for DNA opening; it may wrap around the damaged DNA wedging it open, causing localized melting and twisting that allows XPD/ERCC2 helicase to anchor. The ATP-dependent helicase activity of XPB/ERCC3 may be required for promoter escape. Also involved in transcription-coupled nucleotide excision repair (NER) of damaged DNA. In NER, TFIIH acts by opening DNA around the lesion to allow the excision of the damaged oligonucleotide and its replacement by a new DNA fragment. The structure of the TFIIH transcription complex differs from the NER-TFIIH complex; large movements by XPD/ERCC2 and XPB/ERCC3 are stabilized by XPA. This is General transcription and DNA repair factor IIH helicase/translocase subunit XPB (Ercc3) from Rattus norvegicus (Rat).